We begin with the raw amino-acid sequence, 389 residues long: Putative cyclin-F3-1 (389 aa).

Positions 1–103 are disordered; it reads MEAAAAAAAE…GAAGGSRQPV (103 aa). Over residues 19–43 the composition is skewed to low complexity; sequence VEGAAVAAVAPEAAAEGPSEPNAGE.

Belongs to the cyclin family. Cyclin F subfamily.

In Oryza sativa subsp. japonica (Rice), this protein is Putative cyclin-F3-1 (CYCF3-1).